Consider the following 331-residue polypeptide: Gamma-parvin (331 aa).

At Met-1 the chain carries N-acetylmethionine. Positions 18-38 (QPTEEELPRGGKKKYLSPNSK) are disordered. 2 Calponin-homology (CH) domains span residues 44–151 (EELQ…KRFQ) and 210–317 (HAVQ…QKHS).

The protein belongs to the parvin family. In terms of assembly, interacts with ILK; the interaction promotes the establishment of cell polarity required for leukocyte migration. Interacts with ARHGEF6; the guanine nucleotide exchange factor activity of ARHGEF6 is essential for the PARVG-induced enhancement of cell spreading. In terms of tissue distribution, expressed strongly in spleen and testis, moderately in lung and weakly in brain and heart.

It localises to the cell junction. The protein localises to the focal adhesion. The protein resides in the cell membrane. It is found in the cytoplasm. Its subcellular location is the cytoskeleton. Functionally, plays a role with ILK in promoting the cell adhesion and spreading of leukocytes. This Mus musculus (Mouse) protein is Gamma-parvin (Parvg).